A 189-amino-acid chain; its full sequence is HTH-type transcriptional repressor LfrR (189 aa).

The HTH tetR-type domain occupies 12-70; it reads ERTRRAILDAAMLVLADHPTAALGDIAAAAGVGRSTVHRYYPERTDLLRALARHVHDLS. Positions 33–52 form a DNA-binding region, H-T-H motif; the sequence is ALGDIAAAAGVGRSTVHRYY. Residues 70-71 are proflavine binding; it reads SN.

In terms of assembly, homodimer. Forms a structurally asymmetric homodimer exhibiting local unfolding and a blocked drug-binding site.

Its activity is regulated as follows. Repressor activity is regulated by binding of different substrates of the LfrA multidrug efflux pump, such as acriflavine, proflavine, ethidium bromide and rhodamine 123. Binding of these ligands causes the dissociation of LfrR from the promoter, inducing lfrA expression. In terms of biological role, represses the transcription of the lfrRA operon by binding directly to the promoter region of lfrR-lfrA. Binds specifically to a 143-bp region upstream of the lfrR gene. In Mycolicibacterium smegmatis (strain ATCC 700084 / mc(2)155) (Mycobacterium smegmatis), this protein is HTH-type transcriptional repressor LfrR.